The primary structure comprises 254 residues: Proteasome subunit alpha (254 aa).

Residues 234–254 (EEMLPTPAATEDAPANGDAPS) are disordered.

This sequence belongs to the peptidase T1A family. In terms of assembly, the 20S proteasome core is composed of 14 alpha and 14 beta subunits that assemble into four stacked heptameric rings, resulting in a barrel-shaped structure. The two inner rings, each composed of seven catalytic beta subunits, are sandwiched by two outer rings, each composed of seven alpha subunits. The catalytic chamber with the active sites is on the inside of the barrel. Has a gated structure, the ends of the cylinder being occluded by the N-termini of the alpha-subunits. Is capped by the proteasome-associated ATPase, ARC.

The protein localises to the cytoplasm. The protein operates within protein degradation; proteasomal Pup-dependent pathway. The formation of the proteasomal ATPase ARC-20S proteasome complex, likely via the docking of the C-termini of ARC into the intersubunit pockets in the alpha-rings, may trigger opening of the gate for substrate entry. Interconversion between the open-gate and close-gate conformations leads to a dynamic regulation of the 20S proteasome proteolysis activity. Its function is as follows. Component of the proteasome core, a large protease complex with broad specificity involved in protein degradation. The polypeptide is Proteasome subunit alpha (Rhodococcus erythropolis (strain PR4 / NBRC 100887)).